A 768-amino-acid chain; its full sequence is Cullin-3-B (768 aa).

The segment at 677–698 is disordered; the sequence is VAAKQGESDPERKETRQKVDDD. Positions 682–698 are enriched in basic and acidic residues; sequence GESDPERKETRQKVDDD. The region spanning 698–760 is the Cullin neddylation domain; sequence DRKHEIEAAI…REYLARTPED (63 aa). Lys712 is covalently cross-linked (Glycyl lysine isopeptide (Lys-Gly) (interchain with G-Cter in NEDD8)).

Belongs to the cullin family. As to quaternary structure, component of multiple BCR (BTB-CUL3-RBX1) E3 ubiquitin-protein ligase complexes formed of cul3, rbx1 and a variable BTB domain-containing protein acting as both, adapter to cullin and substrate recognition subunit. Interacts with btbd6. Post-translationally, neddylated. Attachment of NEDD8 is required for the E3 ubiquitin-protein ligase activity of the SCF-like complex.

Its subcellular location is the nucleus. Its pathway is protein modification; protein ubiquitination. Functionally, probable core component of cullin-based SCF-like E3 ubiquitin-protein ligase complexes which mediate the ubiquitination and subsequent proteasomal degradation of target proteins. The E3 ubiquitin-protein ligase activity of the complex is dependent on the neddylation of the cullin subunit. Involved in ER-Golgi transport by regulating the size of COPII coats, thereby playing a key role in collagen export, which is required for embryonic stem (ES) cells division. May play a role in the regulation of mittotic entry via ubiquitination of aurka. This Xenopus laevis (African clawed frog) protein is Cullin-3-B (cul3b).